Here is a 632-residue protein sequence, read N- to C-terminus: tRNA uridine 5-carboxymethylaminomethyl modification enzyme MnmG (632 aa).

FAD-binding positions include 16-21, Val128, and Ser183; that span reads GAGHAG. The interval 206-225 is disordered; that stretch reads PRVNGNTIDYSKTEEEPGDK. Over residues 216-225 the composition is skewed to basic and acidic residues; it reads SKTEEEPGDK. 277 to 291 serves as a coordination point for NAD(+); the sequence is GPRYCPSIEDKVVRF. Gln374 contributes to the FAD binding site.

It belongs to the MnmG family. As to quaternary structure, homodimer. Heterotetramer of two MnmE and two MnmG subunits. The cofactor is FAD.

It localises to the cytoplasm. Its function is as follows. NAD-binding protein involved in the addition of a carboxymethylaminomethyl (cmnm) group at the wobble position (U34) of certain tRNAs, forming tRNA-cmnm(5)s(2)U34. The sequence is that of tRNA uridine 5-carboxymethylaminomethyl modification enzyme MnmG from Lactobacillus acidophilus (strain ATCC 700396 / NCK56 / N2 / NCFM).